Consider the following 524-residue polypeptide: Chromosomal replication initiator protein DnaA (524 aa).

The interval 1 to 73 (MELPESAWEQ…DELLSSADHH (73 aa)) is domain I, interacts with DnaA modulators. Positions 73-187 (HPITSVEISV…DVEGGLQHKS (115 aa)) are domain II. Composition is skewed to polar residues over residues 86–95 (RSTSFETNQG), 106–126 (APRQ…QPQQ), and 153–165 (NGYN…QPYN). Residues 86–173 (RSTSFETNQG…YNDNPMGQGK (88 aa)) are disordered. Residues 188-404 (NLNPTFIFDN…GALKRVIANA (217 aa)) are domain III, AAA+ region. ATP contacts are provided by Gly232, Gly234, Lys235, and Thr236. The tract at residues 405–524 (HFTGRDISVE…VKNLLRTLTT (120 aa)) is domain IV, binds dsDNA.

It belongs to the DnaA family. Oligomerizes as a right-handed, spiral filament on DNA at oriC.

It is found in the cytoplasm. In terms of biological role, plays an essential role in the initiation and regulation of chromosomal replication. ATP-DnaA binds to the origin of replication (oriC) to initiate formation of the DNA replication initiation complex once per cell cycle. Binds the DnaA box (a 9 base pair repeat at the origin) and separates the double-stranded (ds)DNA. Forms a right-handed helical filament on oriC DNA; dsDNA binds to the exterior of the filament while single-stranded (ss)DNA is stabiized in the filament's interior. The ATP-DnaA-oriC complex binds and stabilizes one strand of the AT-rich DNA unwinding element (DUE), permitting loading of DNA polymerase. After initiation quickly degrades to an ADP-DnaA complex that is not apt for DNA replication. Binds acidic phospholipids. This chain is Chromosomal replication initiator protein DnaA, found in Saccharophagus degradans (strain 2-40 / ATCC 43961 / DSM 17024).